The chain runs to 103 residues: UPF0145 protein BC_5181 (103 aa).

The protein belongs to the UPF0145 family.

This Bacillus cereus (strain ATCC 14579 / DSM 31 / CCUG 7414 / JCM 2152 / NBRC 15305 / NCIMB 9373 / NCTC 2599 / NRRL B-3711) protein is UPF0145 protein BC_5181.